A 471-amino-acid chain; its full sequence is MKNPLWGGRFTTSSSDIMKKINESISFDKTLYEEDIAGSIAHCKMLVNQRIISKYEGQLIIHGLEVIQNQISSGTFEFSTDLEDIHMNIEHNLKKMVGNIAGKLHTARSRNDQVATDFKLWIRKSIVKIEHYLHELQDTIINLAESHYNTIMPGFTHLQIAQPVTLGHHLMAYFEMFKRDFSRWQDLYKRMNQCPLGSAALAGTSFPIDRHFVAQELGFYSPTENSIDAVSDRDYAIEFLSNASICIMHLSRLAEEIILWCSYNFKFITLSDNITTGSSIMPQKKNPDAAELIRGKTGRIFASLNQILVVMKGLPLAYSKDMQEDKEALFDATNNLMLCIEAMNNMLSNIIINKNNMLKAAEHDYSTATDLADWLVKNLNLSFREAHETTGQIVKLAEHNQCKLHELTLEQIKTIIPSINDTVFSVLSVENSVASRTSYGGTAPTNVIEAIKKGKAYLSNIKFSQTDKNNI.

It belongs to the lyase 1 family. Argininosuccinate lyase subfamily.

It is found in the cytoplasm. It carries out the reaction 2-(N(omega)-L-arginino)succinate = fumarate + L-arginine. It functions in the pathway amino-acid biosynthesis; L-arginine biosynthesis; L-arginine from L-ornithine and carbamoyl phosphate: step 3/3. This is Argininosuccinate lyase from Ehrlichia canis (strain Jake).